We begin with the raw amino-acid sequence, 140 residues long: Oocyte zinc finger protein XlCOF15 (140 aa).

5 consecutive C2H2-type zinc fingers follow at residues 6–28 (FTCK…QKIH), 34–56 (FTCT…QKVH), 62–84 (FICT…HVIH), 90–112 (FTCA…RAAH), and 118–140 (FICT…LKSH).

It belongs to the krueppel C2H2-type zinc-finger protein family.

It is found in the nucleus. In terms of biological role, may be involved in transcriptional regulation. The chain is Oocyte zinc finger protein XlCOF15 from Xenopus laevis (African clawed frog).